The sequence spans 322 residues: Aspartate carbamoyltransferase catalytic subunit (322 aa).

Positions 65 and 66 each coordinate carbamoyl phosphate. Residue K93 coordinates L-aspartate. Carbamoyl phosphate contacts are provided by R115, H143, and Q146. L-aspartate is bound by residues R176 and R230. Residues G271 and P272 each coordinate carbamoyl phosphate.

It belongs to the aspartate/ornithine carbamoyltransferase superfamily. ATCase family. Heterododecamer (2C3:3R2) of six catalytic PyrB chains organized as two trimers (C3), and six regulatory PyrI chains organized as three dimers (R2).

The enzyme catalyses carbamoyl phosphate + L-aspartate = N-carbamoyl-L-aspartate + phosphate + H(+). It functions in the pathway pyrimidine metabolism; UMP biosynthesis via de novo pathway; (S)-dihydroorotate from bicarbonate: step 2/3. Its function is as follows. Catalyzes the condensation of carbamoyl phosphate and aspartate to form carbamoyl aspartate and inorganic phosphate, the committed step in the de novo pyrimidine nucleotide biosynthesis pathway. In Brucella canis (strain ATCC 23365 / NCTC 10854 / RM-666), this protein is Aspartate carbamoyltransferase catalytic subunit.